A 557-amino-acid chain; its full sequence is Tryptophan 2-monooxygenase (557 aa).

Serine 49, glutamate 69, arginine 71, arginine 77, and arginine 98 together coordinate FMN. A substrate-binding site is contributed by arginine 98.

This sequence belongs to the tryptophan 2-monooxygenase family. As to quaternary structure, monomer. Requires FMN as cofactor.

The catalysed reaction is L-tryptophan + O2 = indole-3-acetamide + CO2 + H2O. It participates in plant hormone metabolism; auxin biosynthesis. The polypeptide is Tryptophan 2-monooxygenase (iaaM) (Pseudomonas savastanoi (Pseudomonas syringae pv. savastanoi)).